Reading from the N-terminus, the 91-residue chain is Large ribosomal subunit protein uL23c (91 aa).

This sequence belongs to the universal ribosomal protein uL23 family. Part of the 50S ribosomal subunit.

The protein resides in the plastid. It is found in the chloroplast. Its function is as follows. Binds to 23S rRNA. This chain is Large ribosomal subunit protein uL23c (rpl23), found in Physcomitrium patens (Spreading-leaved earth moss).